The sequence spans 202 residues: PITH domain-containing protein 1 (202 aa).

Residues 11–184 (SHGVDDGIEY…IVNTVYESKP (174 aa)) form the PITH domain.

This sequence belongs to the PITHD1 family.

This Dictyostelium discoideum (Social amoeba) protein is PITH domain-containing protein 1.